The following is a 238-amino-acid chain: Uridylate kinase (238 aa).

12-15 contributes to the ATP binding site; the sequence is KLSG. UMP is bound at residue Gly-54. Residues Gly-55 and Arg-59 each coordinate ATP. UMP-binding positions include Asp-74 and 135–142; that span reads TGNPYFTT. The ATP site is built by Thr-162, Asn-163, Tyr-168, and Asp-171.

The protein belongs to the UMP kinase family. In terms of assembly, homohexamer.

It is found in the cytoplasm. It carries out the reaction UMP + ATP = UDP + ADP. It participates in pyrimidine metabolism; CTP biosynthesis via de novo pathway; UDP from UMP (UMPK route): step 1/1. Inhibited by UTP. In terms of biological role, catalyzes the reversible phosphorylation of UMP to UDP. The polypeptide is Uridylate kinase (Nitrobacter winogradskyi (strain ATCC 25391 / DSM 10237 / CIP 104748 / NCIMB 11846 / Nb-255)).